Reading from the N-terminus, the 198-residue chain is Penicillin-binding protein activator LpoB (198 aa).

The N-terminal stretch at 1 to 19 (MIRSVNRTGALMMALILSG) is a signal peptide. The N-palmitoyl cysteine moiety is linked to residue Cys20. Cys20 is lipidated: S-diacylglycerol cysteine. Residues 26 to 37 (QPAPVEPTQPVE) are compositionally biased toward low complexity. The interval 26 to 59 (QPAPVEPTQPVEPVQPVPQPEQPIPQPQPVPQPP) is disordered. Residues 38–59 (PVQPVPQPEQPIPQPQPVPQPP) show a composition bias toward pro residues.

This sequence belongs to the LpoB family. As to quaternary structure, interacts with PBP1b.

It localises to the cell outer membrane. Functionally, regulator of peptidoglycan synthesis that is essential for the function of penicillin-binding protein 1B (PBP1b). This chain is Penicillin-binding protein activator LpoB, found in Pantoea ananatis (strain LMG 20103).